Consider the following 87-residue polypeptide: MEKARKEQLIREYATHEGDTGSPEVQVALLTERINHLNEHLKEHKKDHHSRRGLLMMVGKRRGLLNYLKEHDIERYRSLIKRLGLRK.

The span at 1–19 shows a compositional bias: basic and acidic residues; that stretch reads MEKARKEQLIREYATHEGD. The interval 1–22 is disordered; the sequence is MEKARKEQLIREYATHEGDTGS.

The protein belongs to the universal ribosomal protein uS15 family. In terms of assembly, part of the 30S ribosomal subunit. Forms a bridge to the 50S subunit in the 70S ribosome, contacting the 23S rRNA.

One of the primary rRNA binding proteins, it binds directly to 16S rRNA where it helps nucleate assembly of the platform of the 30S subunit by binding and bridging several RNA helices of the 16S rRNA. Its function is as follows. Forms an intersubunit bridge (bridge B4) with the 23S rRNA of the 50S subunit in the ribosome. The sequence is that of Small ribosomal subunit protein uS15 from Clostridium novyi (strain NT).